Reading from the N-terminus, the 379-residue chain is Fimbrium subunit Fim1C (379 aa).

The signal sequence occupies residues 1–17 (MEVKSLLMVMATLTIAG). Residue Cys18 is the site of N-palmitoyl cysteine attachment. A lipid anchor (S-diacylglycerol cysteine) is attached at Cys18. The propeptide occupies 18-45 (CSQNEMTEMNPDTNRTIGLDVYTEVQTR).

It belongs to the bacteroidetes fimbrillin superfamily. Mfa-like family. As to quaternary structure, may be part of the fimbrial tip.

It is found in the fimbrium. It localises to the cell outer membrane. In terms of biological role, probably a component of the fimbrium tip. Fimbriae are filamentous appendages on the cell surface that mediate cell adhesion and biofilm formation. The sequence is that of Fimbrium subunit Fim1C (fim1C) from Phocaeicola vulgatus (strain ATCC 8482 / DSM 1447 / JCM 5826 / CCUG 4940 / NBRC 14291 / NCTC 11154) (Bacteroides vulgatus).